A 220-amino-acid polypeptide reads, in one-letter code: Ribosomal RNA small subunit methyltransferase G (220 aa).

Residues Gly-82, Leu-87, 105–107 (DST), 133–134 (VE), and Arg-147 each bind S-adenosyl-L-methionine.

Belongs to the methyltransferase superfamily. RNA methyltransferase RsmG family.

The protein localises to the cytoplasm. Functionally, specifically methylates the N7 position of a guanine in 16S rRNA. This Chlorobium limicola (strain DSM 245 / NBRC 103803 / 6330) protein is Ribosomal RNA small subunit methyltransferase G.